Reading from the N-terminus, the 312-residue chain is Acetaldehyde dehydrogenase 2 (312 aa).

11-14 (SGNI) contributes to the NAD(+) binding site. The active-site Acyl-thioester intermediate is the cysteine 129. Residues 160-168 (SAGPGTRAN) and asparagine 287 each bind NAD(+).

It belongs to the acetaldehyde dehydrogenase family.

It catalyses the reaction acetaldehyde + NAD(+) + CoA = acetyl-CoA + NADH + H(+). This chain is Acetaldehyde dehydrogenase 2, found in Novosphingobium aromaticivorans (strain ATCC 700278 / DSM 12444 / CCUG 56034 / CIP 105152 / NBRC 16084 / F199).